The following is a 302-amino-acid chain: Glutamate/aspartate import solute-binding protein (302 aa).

An N-terminal signal peptide occupies residues 1–22 (MQLRKLTTAMLVMGLSAGLAHA).

The protein belongs to the bacterial solute-binding protein 3 family. The complex is composed of two ATP-binding proteins (GltL), two transmembrane proteins (GltJ and GltK) and a solute-binding protein (GltI).

Its subcellular location is the periplasm. In terms of biological role, part of the ABC transporter complex GltIJKL involved in glutamate and aspartate uptake. Binds to both glutamate and aspartate. This Salmonella typhimurium (strain LT2 / SGSC1412 / ATCC 700720) protein is Glutamate/aspartate import solute-binding protein (gltI).